The sequence spans 641 residues: SUMO-activating enzyme subunit 2 (641 aa).

ATP-binding positions include 24 to 29 (GAGGIG), D48, 56 to 59 (NLNR), K72, 95 to 96 (SI), and 117 to 122 (DNNAAR). Residues C158 and C161 each coordinate Zn(2+). C173 acts as the Glycyl thioester intermediate in catalysis. K190 participates in a covalent cross-link: Glycyl lysine isopeptide (Lys-Gly) (interchain with G-Cter in SUMO). K236 is covalently cross-linked (Glycyl lysine isopeptide (Lys-Gly) (interchain with G-Cter in SUMO1)). Glycyl lysine isopeptide (Lys-Gly) (interchain with G-Cter in SUMO) cross-links involve residues K257 and K275. Zn(2+) contacts are provided by C439 and C442. The segment at 546–641 (GDVPEKGPQK…EEDDDIIALD (96 aa)) is disordered. Residues 556–579 (PSEQSVKNITNGSDDGAQPSTSKA) show a composition bias toward polar residues. Over residues 582–594 (QDDVLIVDSDEES) the composition is skewed to acidic residues. Glycyl lysine isopeptide (Lys-Gly) (interchain with G-Cter in SUMO) cross-links involve residues K610, K612, and K623. Over residues 630-641 (PVEEDDDIIALD) the composition is skewed to acidic residues.

The protein belongs to the ubiquitin-activating E1 family. In terms of assembly, heterodimer of sae1 and uba2/sae2. The heterodimer corresponds to the two domains that are encoded on a single polypeptide chain in ubiquitin-activating enzyme E1. Interacts with ube2i. In terms of processing, sumoylated with SUMO1 and SUMO2/3 and by UBC9. Sumoylation at Lys-236 inhibits enzymatic activity. Sumoylation at the C-terminal lysine cluster plays an essential role in nuclear trafficking.

Its subcellular location is the cytoplasm. The protein localises to the nucleus. Its pathway is protein modification; protein sumoylation. In terms of biological role, the heterodimer acts as an E1 ligase for sumo1, sumo2, and sumo3. It mediates ATP-dependent activation of sumo proteins followed by formation of a thioester bond between a sumo protein and a conserved active site cysteine residue on uba2/sae2. This chain is SUMO-activating enzyme subunit 2 (uba2), found in Xenopus tropicalis (Western clawed frog).